The chain runs to 485 residues: Serine hydroxymethyltransferase, mitochondrial (485 aa).

K259 carries the post-translational modification N6-(pyridoxal phosphate)lysine.

The protein belongs to the SHMT family. Homotetramer. Requires pyridoxal 5'-phosphate as cofactor.

Its subcellular location is the mitochondrion. It carries out the reaction (6R)-5,10-methylene-5,6,7,8-tetrahydrofolate + glycine + H2O = (6S)-5,6,7,8-tetrahydrofolate + L-serine. It functions in the pathway one-carbon metabolism; tetrahydrofolate interconversion. Its function is as follows. Interconversion of serine and glycine. The sequence is that of Serine hydroxymethyltransferase, mitochondrial (SHM1) from Candida glabrata (strain ATCC 2001 / BCRC 20586 / JCM 3761 / NBRC 0622 / NRRL Y-65 / CBS 138) (Yeast).